A 443-amino-acid chain; its full sequence is Signal recognition particle 54 kDa protein (443 aa).

Residues Gly-107–Thr-114, Asp-189–Arg-193, and Thr-247–Asp-250 each bind GTP.

The protein belongs to the GTP-binding SRP family. SRP54 subfamily. Part of the signal recognition particle protein translocation system, which is composed of SRP and FtsY. Archaeal SRP consists of a 7S RNA molecule of 300 nucleotides and two protein subunits: SRP54 and SRP19.

The protein resides in the cytoplasm. It catalyses the reaction GTP + H2O = GDP + phosphate + H(+). Involved in targeting and insertion of nascent membrane proteins into the cytoplasmic membrane. Binds to the hydrophobic signal sequence of the ribosome-nascent chain (RNC) as it emerges from the ribosomes. The SRP-RNC complex is then targeted to the cytoplasmic membrane where it interacts with the SRP receptor FtsY. The chain is Signal recognition particle 54 kDa protein from Pyrococcus furiosus (strain ATCC 43587 / DSM 3638 / JCM 8422 / Vc1).